The sequence spans 864 residues: Calphotin (864 aa).

Positions 816–858 are leucine-zipper; that stretch reads LQTTDVSLLAIAATLDAIGEKLKDQKARNQQVMDRLCEIEKIL.

Homodimer. In terms of tissue distribution, soma and axons of photoreceptor cells of compound eyes and ocelli.

It is found in the cytoplasm. Functionally, plays important roles in both rhabdomere development and in photoreceptor cell survival. Might function as a calcium-sequestering 'sponge' to regulate the amount of free cytoplasmic calcium. It binds 0.3 mole of Ca(2+) per mole of protein. The protein is Calphotin (Cpn) of Drosophila melanogaster (Fruit fly).